Reading from the N-terminus, the 196-residue chain is Cyclin-dependent kinase inhibitor 6 (196 aa).

Disordered regions lie at residues 1 to 36 (MSER…PDSH) and 55 to 151 (ASDE…RKTP). Low complexity predominate over residues 124–139 (SEGLGETTTEMESSSA). Position 152 is a phosphothreonine; by KIN10 (Thr-152).

The protein belongs to the CDI family. ICK/KRP subfamily. In terms of assembly, specifically interacts with CDKA-1, but not with CDKB1-1. Interacts with CYCD1-1, CYCD4-1 and RHF1A. Binds to FBL17. Interacts with KIN10. Interacts with CYCD3-1. Post-translationally, ubiquitinated by RHF1A and SCF(FBL17). Ubiquitination leads to its subsequent degradation, thus controlling cell cycle progression. The phosphorylation at Thr-152 by KIN10 represses its activity. As to expression, expressed in newly formed organs such as the shoot apex. Expressed in cotyledon, primary root and marginal region of the leaves as well as in developing pollen.

The protein localises to the nucleus. It is found in the nucleoplasm. Its activity is regulated as follows. Down-regulated by KIN10 under a phosphorylation-dependent manner. In terms of biological role, binds and inhibits CYCD2-1/CDKA-1 complex kinase activity. Regulates cell division which is crucial for plant growth, development and morphogenesis. May inhibit CDK kinases specifically involved in the G1/S phase transition. This is Cyclin-dependent kinase inhibitor 6 (KRP6) from Arabidopsis thaliana (Mouse-ear cress).